Here is a 134-residue protein sequence, read N- to C-terminus: ATP synthase epsilon chain (134 aa).

This sequence belongs to the ATPase epsilon chain family. As to quaternary structure, F-type ATPases have 2 components, CF(1) - the catalytic core - and CF(0) - the membrane proton channel. CF(1) has five subunits: alpha(3), beta(3), gamma(1), delta(1), epsilon(1). CF(0) has three main subunits: a, b and c.

The protein resides in the cell membrane. Produces ATP from ADP in the presence of a proton gradient across the membrane. This Listeria innocua serovar 6a (strain ATCC BAA-680 / CLIP 11262) protein is ATP synthase epsilon chain.